Here is a 215-residue protein sequence, read N- to C-terminus: Nascent polypeptide-associated complex subunit alpha (215 aa).

Residues 1 to 82 (MPGEATETVP…EKKARKAMSK (82 aa)) form a disordered region. Polar residues predominate over residues 9-28 (VPVTEQEMQQPQAETGSGTE). Over residues 29–42 (SDSDESVPDLEEGD) the composition is skewed to acidic residues. Residues 44–57 (AQTQTQQAQLAAAA) are compositionally biased toward low complexity. An NAC-A/B domain is found at 70-135 (SRSEKKARKA…AKIEDLSQQA (66 aa)). Serine 166 bears the Phosphoserine mark. Positions 176-213 (VEVKDIELVMSQANVSRAKAVRALKNNNNDIVNAIMEL) constitute a UBA domain.

The protein belongs to the NAC-alpha family.

Functionally, may promote appropriate targeting of ribosome-nascent polypeptide complexes. This is Nascent polypeptide-associated complex subunit alpha (naca) from Danio rerio (Zebrafish).